The following is a 284-amino-acid chain: Bifunctional protein FolD (284 aa).

NADP(+)-binding positions include 166–168 (GSS) and Ile232.

This sequence belongs to the tetrahydrofolate dehydrogenase/cyclohydrolase family. Homodimer.

The enzyme catalyses (6R)-5,10-methylene-5,6,7,8-tetrahydrofolate + NADP(+) = (6R)-5,10-methenyltetrahydrofolate + NADPH. The catalysed reaction is (6R)-5,10-methenyltetrahydrofolate + H2O = (6R)-10-formyltetrahydrofolate + H(+). It participates in one-carbon metabolism; tetrahydrofolate interconversion. In terms of biological role, catalyzes the oxidation of 5,10-methylenetetrahydrofolate to 5,10-methenyltetrahydrofolate and then the hydrolysis of 5,10-methenyltetrahydrofolate to 10-formyltetrahydrofolate. This is Bifunctional protein FolD from Buchnera aphidicola subsp. Cinara cedri (strain Cc).